The primary structure comprises 674 residues: uncharacterized protein (674 aa).

An N-terminal signal peptide occupies residues 1 to 24; sequence MKTLKALKIFIIVYISSVSLESFA. A run of 2 helical transmembrane segments spans residues 226–246 and 254–274; these read IIGA…ALNK and ITLF…LEPL. The interval 363-384 is disordered; the sequence is GNGPGGNNKPIPNFDPDSKKDR. 4 helical membrane passes run 409-429, 436-456, 469-489, and 562-582; these read IIIL…LLYF, CMIT…MVLF, VCIS…LLIT, and VVSI…FYYF. The segment at 624-674 is disordered; the sequence is SSVHAQGKSPVEDKPDIGSKRKDGVQQGEDSENSSGGELADLASGSGGGKL. Residues 633–647 show a composition bias toward basic and acidic residues; sequence PVEDKPDIGSKRKDG.

It belongs to the TrbL/VirB6 family.

The protein localises to the cell membrane. This is an uncharacterized protein from Rickettsia typhi (strain ATCC VR-144 / Wilmington).